The primary structure comprises 529 residues: Bifunctional purine biosynthesis protein PurH (529 aa).

The region spanning 1–148 (MQQPRPIRRA…KNHKDVAIVV (148 aa)) is the MGS-like domain.

It belongs to the PurH family.

It carries out the reaction (6R)-10-formyltetrahydrofolate + 5-amino-1-(5-phospho-beta-D-ribosyl)imidazole-4-carboxamide = 5-formamido-1-(5-phospho-D-ribosyl)imidazole-4-carboxamide + (6S)-5,6,7,8-tetrahydrofolate. The catalysed reaction is IMP + H2O = 5-formamido-1-(5-phospho-D-ribosyl)imidazole-4-carboxamide. Its pathway is purine metabolism; IMP biosynthesis via de novo pathway; 5-formamido-1-(5-phospho-D-ribosyl)imidazole-4-carboxamide from 5-amino-1-(5-phospho-D-ribosyl)imidazole-4-carboxamide (10-formyl THF route): step 1/1. The protein operates within purine metabolism; IMP biosynthesis via de novo pathway; IMP from 5-formamido-1-(5-phospho-D-ribosyl)imidazole-4-carboxamide: step 1/1. The chain is Bifunctional purine biosynthesis protein PurH from Serratia proteamaculans (strain 568).